Consider the following 156-residue polypeptide: Small ribosomal subunit protein uS7 (156 aa).

This sequence belongs to the universal ribosomal protein uS7 family. As to quaternary structure, part of the 30S ribosomal subunit. Contacts proteins S9 and S11.

One of the primary rRNA binding proteins, it binds directly to 16S rRNA where it nucleates assembly of the head domain of the 30S subunit. Is located at the subunit interface close to the decoding center, probably blocks exit of the E-site tRNA. This chain is Small ribosomal subunit protein uS7, found in Mycobacterium sp. (strain JLS).